The chain runs to 310 residues: Olfactory receptor 9Q1 (310 aa).

Residues 1–25 (MAEMNLTLVTEFLLIAFTEYPEWAL) lie on the Extracellular side of the membrane. N5 carries N-linked (GlcNAc...) asparagine glycosylation. A helical transmembrane segment spans residues 26-46 (PLFLLFLFMYLITVLGNLEMI). Residues 47 to 54 (ILILMDHQ) are Cytoplasmic-facing. Residues 55–75 (LHAPMYFLLSHLAFMDVCYSS) form a helical membrane-spanning segment. Residues 76-99 (ITVPQMLAVLLEHGAALSYTRCAA) lie on the Extracellular side of the membrane. Residues C97 and C189 are joined by a disulfide bond. The chain crosses the membrane as a helical span at residues 100-120 (QFFLFTFFGSIDCYLLALMAY). The Cytoplasmic portion of the chain corresponds to 121 to 139 (DRYLAVCQPLLYVTILTQQ). A helical membrane pass occupies residues 140 to 160 (ARLSLVAGAYVAGLISALVRT). At 161 to 197 (VSAFTLSFCGTSEIDFIFCDLPPLLKLTCGESYTQEV) the chain is on the extracellular side. Residues 198–217 (LIIMFAIFVIPASMVVILVS) traverse the membrane as a helical segment. Residues 218–236 (YLFIIVAIMGIPAGSQAKT) lie on the Cytoplasmic side of the membrane. A helical membrane pass occupies residues 237 to 257 (FSTCTSHLTAVSLFFGTLIFM). The Extracellular segment spans residues 258-270 (YLRGNSDQSSEKN). The chain crosses the membrane as a helical span at residues 271-291 (RVVSVLYTEVIPMLNPLIYSL). Residues 292–310 (RNKEVKEALRKILNRAKLS) are Cytoplasmic-facing.

This sequence belongs to the G-protein coupled receptor 1 family.

The protein resides in the cell membrane. Odorant receptor. The sequence is that of Olfactory receptor 9Q1 (OR9Q1) from Homo sapiens (Human).